The primary structure comprises 207 residues: dITP/XTP pyrophosphatase (207 aa).

16–21 contributes to the substrate binding site; sequence SNNKGK. The active-site Proton acceptor is Asp79. Position 79 (Asp79) interacts with Mg(2+). Substrate-binding positions include Ser80, 166–169, Lys189, and 194–195; these read FGYD and HR.

Belongs to the HAM1 NTPase family. As to quaternary structure, homodimer. It depends on Mg(2+) as a cofactor.

The catalysed reaction is XTP + H2O = XMP + diphosphate + H(+). The enzyme catalyses dITP + H2O = dIMP + diphosphate + H(+). It carries out the reaction ITP + H2O = IMP + diphosphate + H(+). Its function is as follows. Pyrophosphatase that catalyzes the hydrolysis of nucleoside triphosphates to their monophosphate derivatives, with a high preference for the non-canonical purine nucleotides XTP (xanthosine triphosphate), dITP (deoxyinosine triphosphate) and ITP. Seems to function as a house-cleaning enzyme that removes non-canonical purine nucleotides from the nucleotide pool, thus preventing their incorporation into DNA/RNA and avoiding chromosomal lesions. The chain is dITP/XTP pyrophosphatase from Acinetobacter baumannii (strain ATCC 17978 / DSM 105126 / CIP 53.77 / LMG 1025 / NCDC KC755 / 5377).